Reading from the N-terminus, the 1114-residue chain is Lysylphosphatidylglycerol biosynthesis bifunctional protein LysX (1114 aa).

Residues Met-1–Ser-11 show a composition bias toward basic and acidic residues. The tract at residues Met-1–Gly-26 is disordered. A phosphatidylglycerol lysyltransferase region spans residues Met-1–Gly-618. 6 helical membrane passes run Ile-38–Val-58, Ala-77–Ser-97, Ile-101–Ser-121, Asn-126–Ala-146, Gly-164–Phe-184, and Phe-219–Leu-239. The lysine--tRNA ligase stretch occupies residues Glu-619–Gln-1114. Positions Val-674 to Met-751 form a DNA-binding region, OB. Mg(2+)-binding residues include Asp-1025 and Glu-1032.

In the N-terminal section; belongs to the LPG synthetase family. The protein in the C-terminal section; belongs to the class-II aminoacyl-tRNA synthetase family. Mg(2+) serves as cofactor.

The protein localises to the cell membrane. The enzyme catalyses tRNA(Lys) + L-lysine + ATP = L-lysyl-tRNA(Lys) + AMP + diphosphate. It carries out the reaction L-lysyl-tRNA(Lys) + a 1,2-diacyl-sn-glycero-3-phospho-(1'-sn-glycerol) = a 1,2-diacyl-sn-glycero-3-phospho-1'-(3'-O-L-lysyl)-sn-glycerol + tRNA(Lys). Catalyzes the production of L-lysyl-tRNA(Lys)transfer and the transfer of a lysyl group from L-lysyl-tRNA(Lys) to membrane-bound phosphatidylglycerol (PG), which produces lysylphosphatidylglycerol (LPG), one of the components of the bacterial membrane with a positive net charge. LPG synthesis contributes to the resistance to cationic antimicrobial peptides (CAMPs) and likely protects M.tuberculosis against the CAMPs produced by competiting microorganisms (bacteriocins). In fact, the modification of anionic phosphatidylglycerol with positively charged L-lysine results in repulsion of the peptides. This chain is Lysylphosphatidylglycerol biosynthesis bifunctional protein LysX (lysX), found in Rhodococcus jostii (strain RHA1).